Consider the following 159-residue polypeptide: Succinate dehydrogenase assembly factor 2, mitochondrial (159 aa).

The N-terminal 14 residues, 1 to 14 (MASFCLSRCCALRG), are a transit peptide targeting the mitochondrion.

It belongs to the SDHAF2 family. Interacts with the flavoprotein subunit within the SDH catalytic dimer.

It is found in the mitochondrion matrix. Functionally, plays an essential role in the assembly of succinate dehydrogenase (SDH), an enzyme complex (also referred to as respiratory complex II) that is a component of both the tricarboxylic acid (TCA) cycle and the mitochondrial electron transport chain, and which couples the oxidation of succinate to fumarate with the reduction of ubiquinone (coenzyme Q) to ubiquinol. Required for flavinylation (covalent attachment of FAD) of the flavoprotein subunit of the SDH catalytic dimer. In Culex quinquefasciatus (Southern house mosquito), this protein is Succinate dehydrogenase assembly factor 2, mitochondrial.